Here is a 226-residue protein sequence, read N- to C-terminus: Sugar fermentation stimulation protein homolog (226 aa).

The protein belongs to the SfsA family.

The polypeptide is Sugar fermentation stimulation protein homolog (Picrophilus torridus (strain ATCC 700027 / DSM 9790 / JCM 10055 / NBRC 100828 / KAW 2/3)).